The following is a 379-amino-acid chain: V-type proton ATPase subunit S1 (379 aa).

The N-terminal stretch at 1–17 is a signal peptide; the sequence is MLWKSLIALCVIGAAVA. At 18-333 the chain is on the lumenal side; that stretch reads EQTPVFLWGA…WDCVGFVTPG (316 aa). Residues asparagine 225 and asparagine 284 are each glycosylated (N-linked (GlcNAc...) asparagine). Cysteine 282 and cysteine 326 are oxidised to a cystine. The helical transmembrane segment at 334–354 threads the bilayer; that stretch reads ILMGLFVVALLLVIMFVGVCW. At 355 to 379 the chain is on the cytoplasmic side; it reads MMDINTMDRFDDPKGKTITINAAAE.

This sequence belongs to the vacuolar ATPase subunit S1 family. As to quaternary structure, accessory component of the multisubunit proton-transporting vacuolar (V)-ATPase protein pump. May interact with ATP6AP2.

Its subcellular location is the endoplasmic reticulum membrane. Its function is as follows. Accessory subunit of the proton-transporting vacuolar (V)-ATPase protein pump, which is required for luminal acidification of secretory vesicles. The polypeptide is V-type proton ATPase subunit S1 (Drosophila melanogaster (Fruit fly)).